The primary structure comprises 81 residues: Protein Vpu (81 aa).

The Extracellular segment spans residues 1 to 7 (MQPSQII). A helical membrane pass occupies residues 8–28 (AIAALVVAAIIAIVVWTIVFI). The Cytoplasmic portion of the chain corresponds to 29 to 81 (EYRRIKRQRKIDCIIDRIRERAEDSGNESEGDREELSKLVEMGHHAPWDIDDL). A phosphoserine; by host CK2 mark is found at Ser-53 and Ser-57.

The protein belongs to the HIV-1 VPU protein family. Homopentamer. Interacts with host CD4 and BRTC; these interactions induce proteasomal degradation of CD4. Interacts with host BST2; this interaction leads to the degradation of host BST2. Interacts with host FBXW11. Interacts with host AP1M1; this interaction plays a role in the mistrafficking and subsequent degradation of host BST2. Interacts with host RANBP2; this interaction allows Vpu to down-regulate host BLM sumoylation. In terms of processing, phosphorylated by host CK2. This phosphorylation is necessary for interaction with human BTRC and degradation of CD4.

It is found in the host membrane. Its activity is regulated as follows. Ion channel activity is inhibited by hexamethylene amiloride in vitro. Its function is as follows. Enhances virion budding by targeting host CD4 and Tetherin/BST2 to proteasome degradation. Degradation of CD4 prevents any unwanted premature interactions between viral Env and its host receptor CD4 in the endoplasmic reticulum. Degradation of antiretroviral protein Tetherin/BST2 is important for virion budding, as BST2 tethers new viral particles to the host cell membrane. Mechanistically, Vpu bridges either CD4 or BST2 to BTRC, a substrate recognition subunit of the Skp1/Cullin/F-box protein E3 ubiquitin ligase, induces their ubiquitination and subsequent proteasomal degradation. The alteration of the E3 ligase specificity by Vpu seems to promote the degradation of host IKBKB, leading to NF-kappa-B down-regulation and subsequent apoptosis. Acts as a viroporin that forms an oligomeric ion channel in membranes. Modulates the host DNA repair mechanisms to promote degradation of nuclear viral cDNA in cells that are already productively infected in order to suppress immune sensing and proviral hyper-integration (superinfection). Manipulates PML-NBs and modulates SUMOylation of host BLM protein thereby enhancing its DNA-end processing activity toward viral unintegrated linear DNA. Also inhibits RAD52-mediated homologous repair of viral cDNA, preventing the generation of dead-end circular forms of single copies of the long terminal repeat and permitting sustained nucleolytic attack. The polypeptide is Protein Vpu (Homo sapiens (Human)).